The sequence spans 500 residues: Pyridine nucleotide-disulfide oxidoreductase domain-containing protein 1 (500 aa).

The residue at position 1 (methionine 1) is an N-acetylmethionine. A disordered region spans residues threonine 211 to leucine 235. Residues tyrosine 213–alanine 228 show a composition bias toward basic and acidic residues.

It belongs to the class-I pyridine nucleotide-disulfide oxidoreductase family. PYROXD1 subfamily. FAD is required as a cofactor.

Its subcellular location is the nucleus. The protein resides in the cytoplasm. It is found in the myofibril. It localises to the sarcomere. Functionally, probable FAD-dependent oxidoreductase; involved in the cellular oxidative stress response. Required for normal sarcomere structure and muscle fiber integrity. In Homo sapiens (Human), this protein is Pyridine nucleotide-disulfide oxidoreductase domain-containing protein 1 (PYROXD1).